The chain runs to 339 residues: Annexin A2 (339 aa).

At serine 2 the chain carries N-acetylserine. Residues 2–24 are S100A10-binding site; it reads STVHEILCKLSLEGDHSTPPSAY. Residue tyrosine 24 is modified to Phosphotyrosine; by SRC. Serine 26 bears the Phosphoserine; by PKC mark. Annexin repeat units lie at residues 33–104 and 105–176; these read FDAE…GLLK and TPAQ…ALAK. Lysine 49 bears the N6-acetyllysine; alternate mark. Residue lysine 49 forms a Glycyl lysine isopeptide (Lys-Gly) (interchain with G-Cter in SUMO1); alternate linkage. Lysine 49 participates in a covalent cross-link: Glycyl lysine isopeptide (Lys-Gly) (interchain with G-Cter in SUMO2); alternate. Lysine 152 carries the post-translational modification N6-acetyllysine. The residue at position 184 (serine 184) is a Phosphoserine. Annexin repeat units lie at residues 189–261 and 265–336; these read ELID…NLVQ and NKPL…YLCG. Tyrosine 199 is subject to Phosphotyrosine. At lysine 227 the chain carries N6-acetyllysine.

Belongs to the annexin family. As to quaternary structure, heterotetramer containing 2 light chains of S100A10/p11 and 2 heavy chains of ANXA2/p36. Interacts with ATP1B1. Interacts with DYSF. Interacts with COCH. Interacts (via repeat Annexin 1) with PCSK9 (via the C-terminal domain); the interaction inhibits the degradation of LDLR. Interacts with CEACAM1 (via the cytoplasmic domain); this interaction is regulated by phosphorylation of CEACAM1. Interacts with APPL2 and APPL1; targets APPL2 to endosomes and acting in parallel to RAB5A. Interacts with S100A4. May interact with UBAP2. In terms of processing, ISGylated. Expressed strongly in velvet antler reserve mesenchyme.

It localises to the secreted. The protein localises to the extracellular space. It is found in the extracellular matrix. The protein resides in the basement membrane. In terms of biological role, calcium-regulated membrane-binding protein whose affinity for calcium is greatly enhanced by anionic phospholipids. It binds two calcium ions with high affinity. May be involved in heat-stress response. Inhibits PCSK9-enhanced LDLR degradation, probably reduces PCSK9 protein levels via a translational mechanism but also competes with LDLR for binding with PCSK9. Binds to endosomes damaged by phagocytosis of particulate wear debris and participates in endosomal membrane stabilization, thereby limiting NLRP3 inflammasome activation. Required for endothelial cell surface plasmin generation and may support fibrinolytic surveillance and neoangiogenesis. The polypeptide is Annexin A2 (ANXA2) (Cervus elaphus (Red deer)).